A 78-amino-acid chain; its full sequence is UPF0401 protein YubL (78 aa).

Belongs to the UPF0401 family.

The chain is UPF0401 protein YubL (yubL) from Salmonella typhi.